The following is a 339-amino-acid chain: Annexin A2 (339 aa).

N-acetylserine is present on serine 2. The tract at residues 2 to 24 (STVHEILCKLSLEGDHSTPPSAY) is S100A10-binding site. Position 24 is a phosphotyrosine; by SRC (tyrosine 24). Serine 26 is modified (phosphoserine; by PKC). Annexin repeat units lie at residues 33-104 (FDAE…GLLK) and 105-176 (TPAQ…ALAK). Residue lysine 49 is modified to N6-acetyllysine; alternate. A Glycyl lysine isopeptide (Lys-Gly) (interchain with G-Cter in SUMO1); alternate cross-link involves residue lysine 49. A Glycyl lysine isopeptide (Lys-Gly) (interchain with G-Cter in SUMO2); alternate cross-link involves residue lysine 49. Lysine 152 bears the N6-acetyllysine mark. At serine 184 the chain carries Phosphoserine. Annexin repeat units lie at residues 189-261 (ELID…NLVQ) and 265-336 (NKPL…YLCG). Position 199 is a phosphotyrosine (tyrosine 199). Residue lysine 227 is modified to N6-acetyllysine.

It belongs to the annexin family. Heterotetramer containing 2 light chains of S100A10/p11 and 2 heavy chains of ANXA2/p36. Interacts with ATP1B1. Interacts with DYSF. Interacts with COCH. Interacts (via repeat Annexin 1) with PCSK9 (via the C-terminal domain); the interaction inhibits the degradation of LDLR. Interacts with CEACAM1 (via the cytoplasmic domain); this interaction is regulated by phosphorylation of CEACAM1. Interacts with APPL2 and APPL1; targets APPL2 to endosomes and acting in parallel to RAB5A. Interacts with S100A4. May interact with UBAP2. Interacts with PLEKHG4B; this interaction is required for PLEKHG4B localization to cell-cell adhesions. Interacts with FAM13A. Interacts with salivary cystatin-L2 (via loop 2) from the tick Ixodes scapularis; the interaction results in reduced activation of mouse NLRC4 inflammasome formation upon Anaplasma phagocytophilum infection. ISGylated.

The protein localises to the secreted. The protein resides in the extracellular space. Its subcellular location is the extracellular matrix. It localises to the basement membrane. It is found in the melanosome. The protein localises to the early endosome. Calcium-regulated membrane-binding protein whose affinity for calcium is greatly enhanced by anionic phospholipids. It binds two calcium ions with high affinity. May be involved in heat-stress response. Inhibits PCSK9-enhanced LDLR degradation, probably reduces PCSK9 protein levels via a translational mechanism but also competes with LDLR for binding with PCSK9. Binds to endosomes damaged by phagocytosis of particulate wear debris and participates in endosomal membrane stabilization, thereby limiting NLRP3 inflammasome activation. Required for endothelial cell surface plasmin generation and may support fibrinolytic surveillance and neoangiogenesis. In terms of biological role, (Microbial infection) Regulates the formation of the NLRC4 inflammasome triggered by Anaplasma phagocytophilum infection. Functionally, (Microbial infection) Protects against Klebsiella pneumoniae infection. Attenuates bacteria-induced pulmonary inflammation and promotes intro-abdominal pathogen clearance. Promotes anti-inflammatory responses by facilitating TLR4 internalization and translocation into early endosomal membranes; this leads to activation of TRAM-dependent endosomal signaling and release of anti-inflammatory cytokines. Its function is as follows. (Microbial infection) Promotes macrophage phagocytic efficiency towards Cryptococcus neoformans and ability to control fungal infection inside the cells. (Microbial infection) Contributes to protection against Pseudomonas aeruginosa infection by regulating autophagy via the AKT1-mTOR-ULK1/2 signaling pathway and activation of Rho GTPases via FAM13A-mediated mechanism. In Mus musculus (Mouse), this protein is Annexin A2 (Anxa2).